The following is a 445-amino-acid chain: KICSTOR subunit 2 (445 aa).

The protein belongs to the KICS2 family. Part of the KICSTOR complex composed of KPTN, ITFG2, KICS2 and SZT2. SZT2 probably serves as a link between the other three proteins in the KICSTOR complex and may mediate the direct interaction with the GATOR complex via GATOR1. The KICSTOR complex interacts directly with the GATOR1 complex and most probably indirectly with the GATOR2 complex in an amino acid-independent manner.

Its subcellular location is the lysosome membrane. In terms of biological role, as part of the KICSTOR complex functions in the amino acid-sensing branch of the TORC1 signaling pathway. Recruits, in an amino acid-independent manner, the GATOR1 complex to the lysosomal membranes and allows its interaction with GATOR2 and the RAG GTPases. Functions upstream of the RAG GTPases and is required to negatively regulate mTORC1 signaling in absence of amino acids. In absence of the KICSTOR complex mTORC1 is constitutively localized to the lysosome and activated. The KICSTOR complex is also probably involved in the regulation of mTORC1 by glucose. In Homo sapiens (Human), this protein is KICSTOR subunit 2.